Here is a 197-residue protein sequence, read N- to C-terminus: 3-isopropylmalate dehydratase small subunit (197 aa).

The protein belongs to the LeuD family. LeuD type 1 subfamily. In terms of assembly, heterodimer of LeuC and LeuD.

It catalyses the reaction (2R,3S)-3-isopropylmalate = (2S)-2-isopropylmalate. It participates in amino-acid biosynthesis; L-leucine biosynthesis; L-leucine from 3-methyl-2-oxobutanoate: step 2/4. In terms of biological role, catalyzes the isomerization between 2-isopropylmalate and 3-isopropylmalate, via the formation of 2-isopropylmaleate. This Shouchella clausii (strain KSM-K16) (Alkalihalobacillus clausii) protein is 3-isopropylmalate dehydratase small subunit.